Here is a 101-residue protein sequence, read N- to C-terminus: Large ribosomal subunit protein uL24 (101 aa).

This sequence belongs to the universal ribosomal protein uL24 family. As to quaternary structure, part of the 50S ribosomal subunit.

One of two assembly initiator proteins, it binds directly to the 5'-end of the 23S rRNA, where it nucleates assembly of the 50S subunit. Its function is as follows. One of the proteins that surrounds the polypeptide exit tunnel on the outside of the subunit. The sequence is that of Large ribosomal subunit protein uL24 from Borrelia turicatae (strain 91E135).